A 91-amino-acid chain; its full sequence is Small ribosomal subunit protein uS19 (91 aa).

It belongs to the universal ribosomal protein uS19 family.

In terms of biological role, protein S19 forms a complex with S13 that binds strongly to the 16S ribosomal RNA. The protein is Small ribosomal subunit protein uS19 of Ralstonia nicotianae (strain ATCC BAA-1114 / GMI1000) (Ralstonia solanacearum).